Here is an 88-residue protein sequence, read N- to C-terminus: Protein MATERNALLY EXPRESSED GENE 2 (88 aa).

The N-terminal stretch at 1–27 (MEYRKRVDALVFFSLLLLGYFAAHAHG) is a signal peptide. An intrachain disulfide couples Cys65 to Cys87.

This sequence belongs to the MEG family. Expressed exclusively in endosperm.

The protein is Protein MATERNALLY EXPRESSED GENE 2 (MEG2) of Zea mays (Maize).